Here is a 236-residue protein sequence, read N- to C-terminus: Urease accessory protein UreG 2 (236 aa).

A disordered region spans residues 1–40 (MEASVHIGNSVPHAHLHSAAPARPADPVRPDGSRRALRIG). 43 to 50 (GPVGSGKT) contacts GTP.

This sequence belongs to the SIMIBI class G3E GTPase family. UreG subfamily. In terms of assembly, homodimer. UreD, UreF and UreG form a complex that acts as a GTP-hydrolysis-dependent molecular chaperone, activating the urease apoprotein by helping to assemble the nickel containing metallocenter of UreC. The UreE protein probably delivers the nickel.

It localises to the cytoplasm. In terms of biological role, facilitates the functional incorporation of the urease nickel metallocenter. This process requires GTP hydrolysis, probably effectuated by UreG. This chain is Urease accessory protein UreG 2, found in Saccharopolyspora erythraea (strain ATCC 11635 / DSM 40517 / JCM 4748 / NBRC 13426 / NCIMB 8594 / NRRL 2338).